The primary structure comprises 298 residues: Succinate dehydrogenase [ubiquinone] iron-sulfur subunit, mitochondrial (298 aa).

The 89-residue stretch at 59–147 (YRFNPEAPGA…STKIYPLPHM (89 aa)) folds into the 2Fe-2S ferredoxin-type domain. 4 residues coordinate [2Fe-2S] cluster: Cys107, Cys112, Cys115, and Cys127. Residues 190–220 (ERDRLDGLYECILCACCSTSCPSYWWNADKY) enclose the 4Fe-4S ferredoxin-type domain. Residues Cys200, Cys203, and Cys206 each coordinate [4Fe-4S] cluster. Cys210 contributes to the [3Fe-4S] cluster binding site. Residue Trp215 coordinates a ubiquinone. Cys257 and Cys263 together coordinate [3Fe-4S] cluster. Cys267 is a binding site for [4Fe-4S] cluster.

It belongs to the succinate dehydrogenase/fumarate reductase iron-sulfur protein family. Component of complex II composed of four subunits: a flavoprotein (FP), an iron-sulfur protein (IP), and a cytochrome b composed of a large and a small subunit. [2Fe-2S] cluster is required as a cofactor. The cofactor is [3Fe-4S] cluster. It depends on [4Fe-4S] cluster as a cofactor.

It localises to the mitochondrion inner membrane. It catalyses the reaction a quinone + succinate = fumarate + a quinol. It functions in the pathway carbohydrate metabolism; tricarboxylic acid cycle; fumarate from succinate (eukaryal route): step 1/1. In terms of biological role, iron-sulfur protein (IP) subunit of succinate dehydrogenase (SDH) that is involved in complex II of the mitochondrial electron transport chain and is responsible for transferring electrons from succinate to ubiquinone (coenzyme Q). This chain is Succinate dehydrogenase [ubiquinone] iron-sulfur subunit, mitochondrial (sdhb-1), found in Caenorhabditis elegans.